A 176-amino-acid chain; its full sequence is ATP-dependent protease subunit HslV (176 aa).

Thr-6 is an active-site residue. 3 residues coordinate Na(+): Ser-161, Cys-164, and Thr-167.

The protein belongs to the peptidase T1B family. HslV subfamily. A double ring-shaped homohexamer of HslV is capped on each side by a ring-shaped HslU homohexamer. The assembly of the HslU/HslV complex is dependent on binding of ATP.

The protein resides in the cytoplasm. It catalyses the reaction ATP-dependent cleavage of peptide bonds with broad specificity.. Its activity is regulated as follows. Allosterically activated by HslU binding. In terms of biological role, protease subunit of a proteasome-like degradation complex believed to be a general protein degrading machinery. This Thermosipho melanesiensis (strain DSM 12029 / CIP 104789 / BI429) protein is ATP-dependent protease subunit HslV.